The sequence spans 782 residues: Coiled-coil alpha-helical rod protein 1 (782 aa).

Composition is skewed to basic and acidic residues over residues 62 to 74 and 208 to 218; these read ERDV…EPGR and ETRRAGEAKEL. Disordered stretches follow at residues 62–82 and 177–218; these read ERDV…WGLE and EQLS…AKEL. Coiled coils occupy residues 111–303, 344–437, and 498–691; these read LRET…SLTH, LMVQ…NAVS, and VTDV…QQEG.

Found in all tissues tested, abundantly expressed in heart, liver, skeletal muscle, kidney and pancreas, and to a lesser extent in lung and placenta. Overexpressed in keratinocytes of psoriatic lesions.

Its subcellular location is the cytoplasm. The protein localises to the nucleus. Functionally, may be a regulator of keratinocyte proliferation or differentiation. This is Coiled-coil alpha-helical rod protein 1 (CCHCR1) from Homo sapiens (Human).